Consider the following 427-residue polypeptide: Glutamate-1-semialdehyde 2,1-aminomutase (427 aa).

The residue at position 265 (lysine 265) is an N6-(pyridoxal phosphate)lysine.

The protein belongs to the class-III pyridoxal-phosphate-dependent aminotransferase family. HemL subfamily. As to quaternary structure, homodimer. Requires pyridoxal 5'-phosphate as cofactor.

The protein resides in the cytoplasm. The enzyme catalyses (S)-4-amino-5-oxopentanoate = 5-aminolevulinate. It participates in porphyrin-containing compound metabolism; protoporphyrin-IX biosynthesis; 5-aminolevulinate from L-glutamyl-tRNA(Glu): step 2/2. The polypeptide is Glutamate-1-semialdehyde 2,1-aminomutase (Bordetella pertussis (strain Tohama I / ATCC BAA-589 / NCTC 13251)).